The primary structure comprises 481 residues: 3-isopropylmalate dehydratase large subunit (481 aa).

Cysteine 357, cysteine 417, and cysteine 420 together coordinate [4Fe-4S] cluster.

The protein belongs to the aconitase/IPM isomerase family. LeuC type 1 subfamily. As to quaternary structure, heterodimer of LeuC and LeuD. It depends on [4Fe-4S] cluster as a cofactor.

The catalysed reaction is (2R,3S)-3-isopropylmalate = (2S)-2-isopropylmalate. It participates in amino-acid biosynthesis; L-leucine biosynthesis; L-leucine from 3-methyl-2-oxobutanoate: step 2/4. Its function is as follows. Catalyzes the isomerization between 2-isopropylmalate and 3-isopropylmalate, via the formation of 2-isopropylmaleate. This is 3-isopropylmalate dehydratase large subunit from Mycolicibacterium vanbaalenii (strain DSM 7251 / JCM 13017 / BCRC 16820 / KCTC 9966 / NRRL B-24157 / PYR-1) (Mycobacterium vanbaalenii).